Consider the following 433-residue polypeptide: GTPase Obg (433 aa).

In terms of domain architecture, Obg spans 1 to 159 (MAFRDVLDIE…RRVRLELRLI (159 aa)). Residues 160-327 (ADVGLVGYPN…LRQALFDLLP (168 aa)) enclose the OBG-type G domain. Residues 166 to 173 (GYPNAGKS), 191 to 195 (FTTLS), 214 to 217 (DIPG), 280 to 283 (NKIE), and 308 to 310 (SAK) each bind ATP. Residues Ser173 and Thr193 each contribute to the Mg(2+) site. The 89-residue stretch at 342-430 (PEEVREEPLT…IGSFRFEYYA (89 aa)) folds into the OCT domain.

It belongs to the TRAFAC class OBG-HflX-like GTPase superfamily. OBG GTPase family. Monomer. The cofactor is Mg(2+).

The protein resides in the cytoplasm. In terms of biological role, an essential GTPase which binds GTP, GDP and possibly (p)ppGpp with moderate affinity, with high nucleotide exchange rates and a fairly low GTP hydrolysis rate. Plays a role in control of the cell cycle, stress response, ribosome biogenesis and in those bacteria that undergo differentiation, in morphogenesis control. This Deinococcus geothermalis (strain DSM 11300 / CIP 105573 / AG-3a) protein is GTPase Obg.